The chain runs to 412 residues: Eukaryotic initiation factor 4A-2 (412 aa).

Ala-2 carries the post-translational modification N-acetylalanine. Residues 39-67 (ESFDAMGLQENLLRGIYAYGFEKPSAIQQ) carry the Q motif motif. Residues 70-240 (IVPFCKGLDV…RKFMSKPVRI (171 aa)) form the Helicase ATP-binding domain. 83-90 (AQSGTGKT) serves as a coordination point for ATP. Thr-145 carries the phosphothreonine modification. Positions 188-191 (DEAD) match the DEAD box motif. Residues 251 to 412 (GIKQFYVNVE…ELPSNVADLL (162 aa)) form the Helicase C-terminal domain.

It belongs to the DEAD box helicase family. eIF4A subfamily. In terms of assembly, eIF4F is a multi-subunit complex, the composition of which varies with external and internal environmental conditions. It is composed of at least EIF4A, EIF4E and EIF4G. In terms of tissue distribution, ubiquitous. Preferentially expressed in flowers, young leaves and roots.

The protein localises to the cytoplasm. It carries out the reaction ATP + H2O = ADP + phosphate + H(+). Functionally, ATP-dependent RNA helicase which is a subunit of the eIF4F complex involved in cap recognition and is required for mRNA binding to ribosome. In the current model of translation initiation, eIF4A unwinds RNA secondary structures in the 5'-UTR of mRNAs which is necessary to allow efficient binding of the small ribosomal subunit, and subsequent scanning for the initiator codon. This chain is Eukaryotic initiation factor 4A-2 (TIF4A-2), found in Arabidopsis thaliana (Mouse-ear cress).